A 743-amino-acid polypeptide reads, in one-letter code: Serine-rich coiled-coil domain-containing protein 1 (743 aa).

Disordered regions lie at residues 1-125 (MGDS…SRNK) and 156-175 (KSEG…SVKQ). A compositionally biased stretch (low complexity) spans 29 to 56 (LPSSPSSSNTVGVHSSSPSSTNSSSGST). The segment covering 81–102 (EPTNQNLSISNGAQPGQSSMQK) has biased composition (polar residues). The stretch at 672-713 (MKDECSMLKLQLKEKDELISQLQEELEKVQHLQKAFASRVDK) forms a coiled coil.

The protein belongs to the CCSER family.

This is Serine-rich coiled-coil domain-containing protein 1 (CCSER1) from Bos taurus (Bovine).